Reading from the N-terminus, the 23-residue chain is Septenin 2b (23 aa).

In terms of tissue distribution, expressed in skin glands.

It localises to the secreted. Functionally, may act as an antimicrobial peptide. The protein is Septenin 2b of Osteopilus septentrionalis (Cuban treefrog).